Consider the following 843-residue polypeptide: F-box only protein 11 (843 aa).

The segment at 1-63 (MVAEESGPGA…RVSGKSQDLS (63 aa)) is disordered. The span at 30–45 (PTKNSMEGASTSTTEN) shows a compositional bias: polar residues. The region spanning 69–115 (QYLQEKLPDEVVLKIFSYLLEQDLCRAACVCKRFSELANDPILWKRL) is the F-box domain. PbH1 repeat units lie at residues 311 to 333 (GACP…YITD), 334 to 356 (HAQG…WVKN), 357 to 379 (HGNP…FTFD), 380 to 402 (HGMG…EVKA), 403 to 425 (YANP…YVHE), 426 to 448 (KGRG…WITS), 449 to 471 (NSDP…YIFG), 472 to 494 (DGRG…QIRT), 495 to 517 (NSCP…YVHE), 518 to 540 (KGQG…WVTT), 541 to 563 (GSTP…YFYD), 564 to 586 (NGHG…QIRT), 587 to 609 (GSNP…LVYN), 610 to 632 (SGLG…WIKT), 633 to 655 (DSNP…CIFN), 656 to 678 (GGRG…LIST), 679 to 701 (NSHP…EITN), 702 to 724 (HATA…FLAS), and 725 to 746 (GVNV…EKAV). The UBR-type zinc-finger motif lies at 749 to 820 (GQCLYKISSY…LSNPCTLAGE (72 aa)).

Component of the SCF(FBXO11) complex consisting of CUL1, RBX1, SKP1 and FBXO11. Interacts with CIITA.

The protein resides in the nucleus. It is found in the chromosome. It functions in the pathway protein modification; protein ubiquitination. In terms of biological role, substrate recognition component of a SCF (SKP1-CUL1-F-box protein) E3 ubiquitin-protein ligase complex which mediates the ubiquitination and subsequent proteasomal degradation of target proteins, such as DTL/CDT2, BCL6, SNAI1 and PRDM1/BLIMP1. The SCF(FBXO11) complex mediates ubiquitination and degradation of BCL6, thereby playing a role in the germinal center B-cells terminal differentiation toward memory B-cells and plasma cells. The SCF(FBXO11) complex also mediates ubiquitination and degradation of DTL, an important step for the regulation of TGF-beta signaling, cell migration and the timing of the cell-cycle progression and exit. The SCF(FBXO11) complex also catalyzes ubiquitination and degradation of GSK3B-phosphorylated SNAI1. Binds to and neddylates phosphorylated p53/TP53, inhibiting its transcriptional activity. Plays a role in the regulatiom of erythropoiesis but not myelopoiesis or megakaryopoiesis. Mechanistically, activates erythroid genes by mediating the degradation of BAHD1, a heterochromatin-associated protein that recruits corepressors to H3K27me3 marks. Participates in macrophage cell death and inflammation in response to bacterial toxins by regulating the expression of complement 5a receptor 1/C5AR1 and IL-1beta. Acts as a critical regulator to determine the level of MHC-II by mediating the recognition of degron at the P/S/T domain of CIITA leading to its ubiquitination and subsequent degradation via the proteasome. Participates in the antiviral repsonse by initiating the activation of TBK1-IRF3-IFN-I axis. Mediates the 'Lys-63'-linked ubiquitination of TRAF3 to strengthen the interaction between TRAF3 and TBK1. The protein is F-box only protein 11 (Fbxo11) of Rattus norvegicus (Rat).